The sequence spans 1437 residues: Envelopment polyprotein (1437 aa).

An N-terminal signal peptide occupies residues 1–21 (MAISTSLLIVALLIKLCLVNT). Over 22 to 207 (APPISKCFQD…GYMASSICQN (186 aa)) the chain is Lumenal. 2 N-linked (GlcNAc...) asparagine; by host glycosylation sites follow: Asn65 and Asn88. The helical transmembrane segment at 208–228 (IELIIIIILTLAIFIFMCIIT) threads the bilayer. At 229–312 (RTYICYLMLP…RVARSLCKSK (84 aa)) the chain is on the cytoplasmic side. The helical transmembrane segment at 313 to 333 (GSSLVISILTAMLILSFITPL) threads the bilayer. Residues 334-373 (EAMTTNYPDDKKFTLKEVNDIVLGRDMEQELKSSILILMS) are Lumenal-facing. Residues 374–394 (ICGIGIILIFFGLTVLLEIVL) form a helical membrane-spanning segment. Topologically, residues 395-460 (ELIAKRSTIF…TYYIKIRNLK (66 aa)) are cytoplasmic. Residues 461-481 (LIMLIFSIVILMQNATMLVVA) form a helical membrane-spanning segment. Residues 482–1391 (GENCWTNTEI…EPLNNFFGNY (910 aa)) are Lumenal-facing. Asn627 and Asn1173 each carry an N-linked (GlcNAc...) asparagine; by host glycan. A helical transmembrane segment spans residues 1392-1412 (LNMFLYILGGIILLFLALYIL). Residues 1413–1437 (MPMCARLRDELKRNERLHQMEMKKR) lie on the Cytoplasmic side of the membrane.

The protein belongs to the orthobunyavirus envelope glycoprotein family. In terms of assembly, glycoprotein C and Glycoprotein N interact with each other. Specific enzymatic cleavages in vivo yield mature proteins including nonstructural protein NSm, Glycoprotein C, and Glycoprotein N.

The protein localises to the virion membrane. Its subcellular location is the host Golgi apparatus membrane. It localises to the host endoplasmic reticulum membrane. Glycoprotein C and Glycoprotein N interact with each other and are present at the surface of the virion. They are able to attach the virion to a cell receptor and to promote fusion of membranes after endocytosis of the virion. This Culex protein is Envelopment polyprotein (GP).